The chain runs to 62 residues: UPF0339 protein Atu5359 (62 aa).

This sequence belongs to the UPF0339 family.

The chain is UPF0339 protein Atu5359 from Agrobacterium fabrum (strain C58 / ATCC 33970) (Agrobacterium tumefaciens (strain C58)).